Reading from the N-terminus, the 129-residue chain is Small ribosomal subunit protein uS11 (129 aa).

The protein belongs to the universal ribosomal protein uS11 family. Part of the 30S ribosomal subunit. Interacts with proteins S7 and S18. Binds to IF-3.

In terms of biological role, located on the platform of the 30S subunit, it bridges several disparate RNA helices of the 16S rRNA. Forms part of the Shine-Dalgarno cleft in the 70S ribosome. The sequence is that of Small ribosomal subunit protein uS11 from Hamiltonella defensa subsp. Acyrthosiphon pisum (strain 5AT).